Reading from the N-terminus, the 713-residue chain is Ribosomal RNA large subunit methyltransferase K/L (713 aa).

Residues 43–154 (LAYRITLWTR…NGVITIAMNF (112 aa)) enclose the THUMP domain.

The protein belongs to the methyltransferase superfamily. RlmKL family.

Its subcellular location is the cytoplasm. The enzyme catalyses guanosine(2445) in 23S rRNA + S-adenosyl-L-methionine = N(2)-methylguanosine(2445) in 23S rRNA + S-adenosyl-L-homocysteine + H(+). The catalysed reaction is guanosine(2069) in 23S rRNA + S-adenosyl-L-methionine = N(2)-methylguanosine(2069) in 23S rRNA + S-adenosyl-L-homocysteine + H(+). Its function is as follows. Specifically methylates the guanine in position 2445 (m2G2445) and the guanine in position 2069 (m7G2069) of 23S rRNA. The protein is Ribosomal RNA large subunit methyltransferase K/L of Shewanella sp. (strain MR-4).